The chain runs to 173 residues: Disulfide bond formation protein B (173 aa).

Topologically, residues 1 to 11 (MNALQWSFRAQ) are cytoplasmic. A helical membrane pass occupies residues 12–28 (CLTGFLFCTGLLAYAIF). The Periplasmic portion of the chain corresponds to 29–46 (LQLHQGLEPCPLCIFQRI). Cys38 and Cys41 are disulfide-bonded. Residues 47 to 63 (AFAVLGILFLIAGLYNS) form a helical membrane-spanning segment. At 64 to 70 (SNVYTRK) the chain is on the cytoplasmic side. Residues 71–88 (AYGLLIFLTAAIGTGIAG) form a helical membrane-spanning segment. Residues 89–145 (RHVWVQLMPHNTISSCGSPLSFLSETMGPFEVFRTVLTGTSDCGNIDWRFLGLSMPM) are Periplasmic-facing. Cys104 and Cys131 are oxidised to a cystine. A helical transmembrane segment spans residues 146–164 (WSMFWFVALALLGLLVGFK). Residues 165–173 (AERRKPLFS) lie on the Cytoplasmic side of the membrane.

Belongs to the DsbB family.

The protein resides in the cell inner membrane. Functionally, required for disulfide bond formation in some periplasmic proteins. Acts by oxidizing the DsbA protein. In Xylella fastidiosa (strain 9a5c), this protein is Disulfide bond formation protein B.